The sequence spans 124 residues: uncharacterized protein (124 aa).

A helical transmembrane segment spans residues 70-90; sequence LLYLALVLLLVVILSTAFFSI.

The protein resides in the membrane. This is an uncharacterized protein from Saccharomyces cerevisiae (strain ATCC 204508 / S288c) (Baker's yeast).